The chain runs to 71 residues: General transcription and DNA repair factor IIH subunit TFB5 (71 aa).

Belongs to the TFB5 family. In terms of assembly, component of the 7-subunit TFIIH core complex.

The protein resides in the nucleus. It localises to the chromosome. Component of the general transcription and DNA repair factor IIH (TFIIH) core complex, which is involved in general and transcription-coupled nucleotide excision repair (NER) of damaged DNA and in RNA transcription by RNA polymerase II. In NER, TFIIH acts by opening DNA around the lesion to allow the excision of the damaged oligonucleotide and its replacement by a new DNA fragment. In transcription, TFIIH has an essential role in transcription initiation. When the pre-initiation complex (PIC) has been established, TFIIH is required for promoter opening and promoter escape. Necessary for the stability of the TFIIH complex and for the presence of normal levels of TFIIH in the cell. Required for efficient binding of TFIIH to damaged DNA. Dispensable for normal development, but required when transcription is challenged. The sequence is that of General transcription and DNA repair factor IIH subunit TFB5 from Caenorhabditis elegans.